The sequence spans 214 residues: Killer cell lectin-like receptor subfamily B member 1 (214 aa).

The Cytoplasmic segment spans residues 1-42; that stretch reads MDAPVLYAELHLANTQGLRCTSPPSPRQDACWGSGWHRVALK. Residues 43 to 63 traverse the membrane as a helical; Signal-anchor for type II membrane protein segment; sequence LGCVGLILLLMGLSVLVGFLV. Topologically, residues 64-214 are extracellular; it reads QKPPIEKCSV…WICQKTLKRV (151 aa). The 111-residue stretch at 98–208 folds into the C-type lectin domain; the sequence is HWNKCLFISQ…CSSDNHWICQ (111 aa). Disulfide bonds link Cys119-Cys207 and Cys186-Cys199.

It localises to the membrane. The polypeptide is Killer cell lectin-like receptor subfamily B member 1 (Klrb1) (Rattus norvegicus (Rat)).